Consider the following 205-residue polypeptide: Proteasome subunit beta type-3 (205 aa).

The protein belongs to the peptidase T1B family. The 26S proteasome consists of a 20S proteasome core and two 19S regulatory subunits. The 20S proteasome core is composed of 28 subunits that are arranged in four stacked rings, resulting in a barrel-shaped structure. The two end rings are each formed by seven alpha subunits, and the two central rings are each formed by seven beta subunits. The catalytic chamber with the active sites is on the inside of the barrel.

It is found in the cytoplasm. Its subcellular location is the nucleus. Its function is as follows. Non-catalytic component of the proteasome, a multicatalytic proteinase complex which is characterized by its ability to cleave peptides with Arg, Phe, Tyr, Leu, and Glu adjacent to the leaving group at neutral or slightly basic pH. The proteasome has an ATP-dependent proteolytic activity. This is Proteasome subunit beta type-3 (psmb3) from Oncorhynchus mykiss (Rainbow trout).